Consider the following 915-residue polypeptide: Probable dipeptidyl-aminopeptidase B (915 aa).

Residues 1–82 (MAPPFTDDPE…GAFLGPPGVP (82 aa)) are disordered. Residues 1–94 (MAPPFTDDPE…RQPMDRGFRR (94 aa)) lie on the Cytoplasmic side of the membrane. Positions 15 to 32 (STSRLSQDSLSSVSTTSL) are enriched in low complexity. Positions 36-62 (RIQEEMDRDPSASRSARRDLLPATKDE) are enriched in basic and acidic residues. The helical; Signal-anchor for type II membrane protein transmembrane segment at 95–115 (ILIIIGAVFVGAWLAGLGIFV) threads the bilayer. Residues 116 to 915 (LSGSYKHESD…IDTKKRRHVS (800 aa)) lie on the Vacuolar side of the membrane. 2 N-linked (GlcNAc...) asparagine glycosylation sites follow: Asn355 and Asn577. Residue Ser760 is the Charge relay system of the active site. Asn819 carries N-linked (GlcNAc...) asparagine glycosylation. Residues Asp837 and His870 each act as charge relay system in the active site.

The protein belongs to the peptidase S9B family.

It localises to the vacuole membrane. The enzyme catalyses Release of an N-terminal dipeptide, Xaa-Yaa-|-Zaa-, from a polypeptide, preferentially when Yaa is Pro, provided Zaa is neither Pro nor hydroxyproline.. Its function is as follows. Type IV dipeptidyl-peptidase which removes N-terminal dipeptides sequentially from polypeptides having unsubstituted N-termini provided that the penultimate residue is proline. The chain is Probable dipeptidyl-aminopeptidase B (DAPB) from Metarhizium robertsii (strain ARSEF 23 / ATCC MYA-3075) (Metarhizium anisopliae (strain ARSEF 23)).